The primary structure comprises 527 residues: Pentatricopeptide repeat-containing protein At5g41170, mitochondrial (527 aa).

The N-terminal 35 residues, 1 to 35 (MAMRFFQLHRNRLVKGNSGKALSFSRLLDLSFWVR), are a transit peptide targeting the mitochondrion. PPR repeat units lie at residues 36-70 (AFCN…RPLP), 71-105 (SIID…GVSH), 106-140 (DLYT…GFEP), 141-175 (DIVT…GIKP), 176-210 (DVVM…GIRP), 211-245 (DVVM…KIKP), 246-280 (DVIT…SIAP), 281-315 (NIFT…GCFP), 316-350 (DVVA…GLTG), 351-385 (NTIT…GVPP), 386-420 (NIRT…EMDG), 424-458 (NIWT…EMDI), 459-493 (GIIT…GVKP), and 494-527 (NVVT…DGVS).

This sequence belongs to the PPR family. P subfamily.

It is found in the mitochondrion. In Arabidopsis thaliana (Mouse-ear cress), this protein is Pentatricopeptide repeat-containing protein At5g41170, mitochondrial.